The sequence spans 516 residues: uncharacterized protein (516 aa).

The protein to H.influenzae HI_0521.

This is an uncharacterized protein from Escherichia coli (strain K12).